The sequence spans 103 residues: Large ribosomal subunit protein bL21 (103 aa).

Belongs to the bacterial ribosomal protein bL21 family. As to quaternary structure, part of the 50S ribosomal subunit. Contacts protein L20.

In terms of biological role, this protein binds to 23S rRNA in the presence of protein L20. The chain is Large ribosomal subunit protein bL21 from Psychromonas ingrahamii (strain DSM 17664 / CCUG 51855 / 37).